The following is a 291-amino-acid chain: S-adenosylmethionine uptake transporter (291 aa).

10 consecutive transmembrane segments (helical) span residues 4-24 (ALKT…SSSA), 41-61 (VAFF…VYYG), 74-91 (ILRG…TYGL), 98-118 (TATV…VFFL), 121-141 (NIIW…VITL), 148-168 (FNPE…LDII), 178-198 (MISM…PAAA), 206-226 (LFEL…LFLL), 237-257 (ATAP…YFIF), and 260-280 (FPDK…LFII). 2 EamA domains span residues 21–141 (SSSA…VITL) and 160–280 (ISFA…LFII).

It belongs to the drug/metabolite transporter (DMT) superfamily. 10 TMS drug/metabolite exporter (DME) (TC 2.A.7.3) family.

The protein resides in the cell inner membrane. Its function is as follows. Transports S-adenosylmethionine. This Rickettsia bellii (strain RML369-C) protein is S-adenosylmethionine uptake transporter (sam).